The chain runs to 628 residues: tRNA uridine 5-carboxymethylaminomethyl modification enzyme MnmG (628 aa).

Residue 14-19 (GAGHAG) participates in FAD binding. Residue 274 to 288 (GPRYCPSIEDKIVRF) coordinates NAD(+).

Belongs to the MnmG family. In terms of assembly, homodimer. Heterotetramer of two MnmE and two MnmG subunits. FAD is required as a cofactor.

It localises to the cytoplasm. In terms of biological role, NAD-binding protein involved in the addition of a carboxymethylaminomethyl (cmnm) group at the wobble position (U34) of certain tRNAs, forming tRNA-cmnm(5)s(2)U34. This Clostridium kluyveri (strain ATCC 8527 / DSM 555 / NBRC 12016 / NCIMB 10680 / K1) protein is tRNA uridine 5-carboxymethylaminomethyl modification enzyme MnmG.